The following is a 564-amino-acid chain: Carbamoyl phosphate synthase large chain, N-terminal section (564 aa).

Residues Met1–Glu399 form a carboxyphosphate synthetic domain region. The ATP site is built by Arg127, Arg167, Gly173, Gly174, Glu206, Val208, Glu213, Gly239, Val240, His241, Gln282, and Glu296. The 195-residue stretch at Arg131–Ile325 folds into the ATP-grasp domain. Positions 282, 296, and 298 each coordinate Mg(2+). Mn(2+) contacts are provided by Gln282, Glu296, and Asn298. Residues Ile400 to Ala560 are oligomerization domain.

This sequence belongs to the CarB family. Composed of two chains; the small (or glutamine) chain promotes the hydrolysis of glutamine to ammonia, which is used by the large (or ammonia) chain to synthesize carbamoyl phosphate. Tetramer of heterodimers (alpha,beta)4. The cofactor is Mg(2+). It depends on Mn(2+) as a cofactor.

It carries out the reaction hydrogencarbonate + L-glutamine + 2 ATP + H2O = carbamoyl phosphate + L-glutamate + 2 ADP + phosphate + 2 H(+). It catalyses the reaction hydrogencarbonate + NH4(+) + 2 ATP = carbamoyl phosphate + 2 ADP + phosphate + 2 H(+). It functions in the pathway amino-acid biosynthesis; L-arginine biosynthesis; carbamoyl phosphate from bicarbonate: step 1/1. Its pathway is pyrimidine metabolism; UMP biosynthesis via de novo pathway; (S)-dihydroorotate from bicarbonate: step 1/3. Functionally, large subunit of the glutamine-dependent carbamoyl phosphate synthetase (CPSase). CPSase catalyzes the formation of carbamoyl phosphate from the ammonia moiety of glutamine, carbonate, and phosphate donated by ATP, constituting the first step of 2 biosynthetic pathways, one leading to arginine and/or urea and the other to pyrimidine nucleotides. The large subunit (synthetase) binds the substrates ammonia (free or transferred from glutamine from the small subunit), hydrogencarbonate and ATP and carries out an ATP-coupled ligase reaction, activating hydrogencarbonate by forming carboxy phosphate which reacts with ammonia to form carbamoyl phosphate. The chain is Carbamoyl phosphate synthase large chain, N-terminal section (carB1) from Methanopyrus kandleri (strain AV19 / DSM 6324 / JCM 9639 / NBRC 100938).